We begin with the raw amino-acid sequence, 132 residues long: Small ribosomal subunit protein uS11 (132 aa).

Positions 1-16 (MAAGMKGKRSRRRKER) are enriched in basic residues. The interval 1–20 (MAAGMKGKRSRRRKERKNVE) is disordered.

It belongs to the universal ribosomal protein uS11 family. As to quaternary structure, part of the 30S ribosomal subunit. Interacts with proteins S7 and S18. Binds to IF-3.

In terms of biological role, located on the platform of the 30S subunit, it bridges several disparate RNA helices of the 16S rRNA. Forms part of the Shine-Dalgarno cleft in the 70S ribosome. This is Small ribosomal subunit protein uS11 from Clostridium botulinum (strain Kyoto / Type A2).